Consider the following 34-residue polypeptide: Photosystem II reaction center protein Psb30 (34 aa).

A helical membrane pass occupies residues 5–25; that stretch reads VLFQLTALIFVVAAGPLVIVL.

The protein belongs to the Psb30/Ycf12 family. In terms of assembly, PSII is composed of 1 copy each of membrane proteins PsbA, PsbB, PsbC, PsbD, PsbE, PsbF, PsbH, PsbI, PsbJ, PsbK, PsbL, PsbM, PsbT, PsbX, PsbY, PsbZ, Psb30/Ycf12, peripheral proteins of the oxygen-evolving complex and a large number of cofactors. It forms dimeric complexes.

It is found in the plastid. It localises to the chloroplast thylakoid membrane. In terms of biological role, a core subunit of photosystem II (PSII), probably helps stabilize the reaction center. This is Photosystem II reaction center protein Psb30 from Tupiella akineta (Green alga).